The primary structure comprises 470 residues: Cytochrome P450 monooxygenase FUM2 (470 aa).

Cys414 contributes to the heme binding site.

Belongs to the cytochrome P450 family. Requires heme as cofactor.

It functions in the pathway mycotoxin biosynthesis. In terms of biological role, cytochrome P450 monooxygenase; part of the gene cluster that mediates the biosynthesis of fumonisins B1 (FB1), B2 (FB2), B3 (FB3), and B4 (FB4), which are carcinogenic mycotoxins. Within the pathway, FUM2 performs the C-10 hydroxylation present in FB2 and FB4 and which occurs early in the biosynthesis. The biosynthesis starts with the FUM1-catalyzed carbon chain assembly from one molecule of acetyl-CoA, eight molecules of malonyl-CoA, and two molecules of methionine (in S-adenosyl form). The C18 polyketide chain is released from the enzyme by a nucleophilic attack of a carbanion, which is derived from R-carbon of alanine by decarboxylation, on the carbonyl carbon of polyketide acyl chain. This step is catalyzed by the pyridoxal 5'-phosphate-dependent aminoacyl transferase FUM8. The resultant 3-keto intermediate is then stereospecifically reduced to a 3-hydroxyl product by reductase FUM13. Subsequent oxidations at C-10 by the cytochrome P450 monooxygenase FUM2, C-14 and C-15 by FUM6, FUM12 or FUM15, tricarballylic esterification of the hydroxyl groups on C-14 and C-15 by acyltransferase FUM14, and C-5 hydroxylation by 2-keto-glutarate-dependent dioxygenase FUM3 furnish the biosynthesis of fumonisins. The tricarballylic moieties are most likely derived from the citric acid cycle, and their addition to the carbon backbone may involve FUM7, FUM10, FUM11 and FUM14. This chain is Cytochrome P450 monooxygenase FUM2, found in Gibberella moniliformis (strain M3125 / FGSC 7600) (Maize ear and stalk rot fungus).